A 343-amino-acid chain; its full sequence is Retroviral-like aspartic protease 1 (343 aa).

Topologically, residues 1-55 are cytoplasmic; it reads MGSPGASLGIKKALQSEQATALPASAPAVSQPTAPAPSCLPKAGQVIPTLLREAP. A propeptide spanning residues 1–190 is cleaved from the precursor; that stretch reads MGSPGASLGI…HLPKEIVFAN (190 aa). A helical transmembrane segment spans residues 56–76; sequence FSSVIAPTLLCGFLFLAWVAA. The Extracellular segment spans residues 77 to 343; that stretch reads EVPEESSRMA…SEEGRQELSH (267 aa). The 82-residue stretch at 207 to 288 folds into the Peptidase A2 domain; the sequence is VRFLVDSGAQ…AEEAIIGTDV (82 aa). Asp-212 is a catalytic residue. Asn-276 carries N-linked (GlcNAc...) asparagine glycosylation. A propeptide spanning residues 327-343 is cleaved from the precursor; the sequence is LIEEDPSSEEGRQELSH.

Homodimer. Undergoes autocleavage which is necessary for activation of the protein. In terms of tissue distribution, expressed primarily in the granular layer of the epidermis and inner root sheath of hair follicles. In psoriatic skin, expressed throughout the stratum corneum. In ulcerated skin, expressed in the stratum granulosum of intact epidermis but almost absent from ulcerated regions. Expressed in differentiated areas of squamous cell carcinomas but not in undifferentiated tumors.

It is found in the membrane. In terms of biological role, protease responsible for filaggrin processing, essential for the maintenance of a proper epidermis organization. In Homo sapiens (Human), this protein is Retroviral-like aspartic protease 1.